Here is a 367-residue protein sequence, read N- to C-terminus: Heme A synthase (367 aa).

The next 8 helical transmembrane spans lie at 25 to 45, 111 to 131, 139 to 159, 174 to 194, 210 to 230, 272 to 292, 305 to 325, and 327 to 347; these read ALRL…LVGG, LIAR…WLTG, WPLV…WWMV, LATH…IMRG, GLAA…ALVA, FIHR…MVIA, AVLL…TLLM, and VPLH…GFAV. Position 274 (His-274) interacts with heme. His-335 is a heme binding site.

It belongs to the COX15/CtaA family. Type 2 subfamily. In terms of assembly, interacts with CtaB. Heme b is required as a cofactor.

It is found in the cell membrane. It carries out the reaction Fe(II)-heme o + 2 A + H2O = Fe(II)-heme a + 2 AH2. Its pathway is porphyrin-containing compound metabolism; heme A biosynthesis; heme A from heme O: step 1/1. Catalyzes the conversion of heme O to heme A by two successive hydroxylations of the methyl group at C8. The first hydroxylation forms heme I, the second hydroxylation results in an unstable dihydroxymethyl group, which spontaneously dehydrates, resulting in the formyl group of heme A. In Rhizobium etli (strain ATCC 51251 / DSM 11541 / JCM 21823 / NBRC 15573 / CFN 42), this protein is Heme A synthase.